A 950-amino-acid polypeptide reads, in one-letter code: Xylosyltransferase 1 (950 aa).

At Met1–Ala17 the chain is on the cytoplasmic side. Residues Leu18–Leu38 form a helical; Signal-anchor for type II membrane protein membrane-spanning segment. Topologically, residues His39–Arg950 are lumenal. The segment at Ala42 to Cys246 is disordered. The segment covering Pro91–Pro104 has biased composition (low complexity). Basic and acidic residues predominate over residues Lys134–Glu150. Residues Val152 to Thr161 are compositionally biased toward polar residues. The segment covering His166–Lys193 has biased composition (basic and acidic residues). Asn215 carries N-linked (GlcNAc...) asparagine glycosylation. Intrachain disulfides connect Cys246/Cys274, Cys290/Cys531, Cys550/Cys563, and Cys552/Cys561. UDP-alpha-D-xylose-binding positions include Val322, Asp350, and Thr379–Trp381. A glycan (N-linked (GlcNAc...) asparagine) is linked at Asn410. Asp483–Trp484 is a binding site for UDP-alpha-D-xylose. Residues Ser564 and Arg587–Lys588 contribute to the UDP-alpha-D-xylose site. Cystine bridges form between Cys664-Cys918 and Cys911-Cys924. The N-linked (GlcNAc...) asparagine glycan is linked to Asn768. Positions Ser931–Arg950 are disordered.

This sequence belongs to the glycosyltransferase 14 family. XylT subfamily. In terms of assembly, monomer. The cofactor is a divalent metal cation. In terms of processing, contains 7 disulfide bonds. Post-translationally, N-glycosylated.

The protein localises to the golgi apparatus membrane. The enzyme catalyses UDP-alpha-D-xylose + L-seryl-[protein] = 3-O-(beta-D-xylosyl)-L-seryl-[protein] + UDP + H(+). It functions in the pathway glycan metabolism; chondroitin sulfate biosynthesis. The protein operates within glycan metabolism; heparan sulfate biosynthesis. Its function is as follows. Catalyzes the first step in the biosynthesis of chondroitin sulfate and dermatan sulfate proteoglycans, such as DCN. Transfers D-xylose from UDP-D-xylose to specific serine residues of the core protein. Required for normal maturation of chondrocytes during bone development, normal onset of ossification and normal embryonic and postnatal skeleton development, especially of the long bones. This is Xylosyltransferase 1 (XYLT1) from Canis lupus familiaris (Dog).